The primary structure comprises 145 residues: Neuromedin-S (145 aa).

An N-terminal signal peptide occupies residues 1-27 (MRSEKHLLPLPLLLAICCLGTLHLSSG). 2 consecutive propeptides follow at residues 28-89 (FPQS…HEIY) and 92-117 (FLFQFSRAKDPSLKIGESQIATAEYT). Asparagine 136 is subject to Asparagine amide. A propeptide spanning residues 140-145 (VSINEH) is cleaved from the precursor.

This sequence belongs to the NmU family. As to expression, expressed by the skin glands.

It localises to the secreted. Stimulates uterine smooth muscle contraction (EC(50)=1.6 nM). Synthetic peptide NmS-17 induces calcium mobilization in CHO cells transfected with either human FM-3/GPR66 (EC(50)=0.085 nM) or FM-4/TGR-1 (EC(50)=0.231 nM) NmU/NmS receptors. The protein is Neuromedin-S (nms) of Bombina maxima (Giant fire-bellied toad).